The primary structure comprises 72 residues: DNA gyrase inhibitor YacG (72 aa).

Zn(2+) contacts are provided by Cys-17, Cys-20, Cys-32, and Cys-36. The tract at residues 51–72 (IPGPEEEEMSYPPRSDDENRSR) is disordered.

Belongs to the DNA gyrase inhibitor YacG family. As to quaternary structure, interacts with GyrB. The cofactor is Zn(2+).

Inhibits all the catalytic activities of DNA gyrase by preventing its interaction with DNA. Acts by binding directly to the C-terminal domain of GyrB, which probably disrupts DNA binding by the gyrase. The polypeptide is DNA gyrase inhibitor YacG (Methylorubrum extorquens (strain PA1) (Methylobacterium extorquens)).